A 103-amino-acid chain; its full sequence is Small ribosomal subunit protein uS10 (103 aa).

Belongs to the universal ribosomal protein uS10 family. As to quaternary structure, part of the 30S ribosomal subunit.

Involved in the binding of tRNA to the ribosomes. The sequence is that of Small ribosomal subunit protein uS10 from Aromatoleum aromaticum (strain DSM 19018 / LMG 30748 / EbN1) (Azoarcus sp. (strain EbN1)).